The chain runs to 632 residues: Biosynthetic arginine decarboxylase (632 aa).

N6-(pyridoxal phosphate)lysine is present on Lys-101. Substrate is bound at residue 281-291; it reads FDVGGGLGVDY.

This sequence belongs to the Orn/Lys/Arg decarboxylase class-II family. SpeA subfamily. The cofactor is Mg(2+). Requires pyridoxal 5'-phosphate as cofactor.

It catalyses the reaction L-arginine + H(+) = agmatine + CO2. Its pathway is amine and polyamine biosynthesis; agmatine biosynthesis; agmatine from L-arginine: step 1/1. Catalyzes the biosynthesis of agmatine from arginine. In Salmonella agona (strain SL483), this protein is Biosynthetic arginine decarboxylase.